The chain runs to 118 residues: Small ribosomal subunit protein uS13 (118 aa).

Residues 91 to 118 (HRHSLPVRGQRTKTNARTRKGPRKPIRK) form a disordered region.

It belongs to the universal ribosomal protein uS13 family. Part of the 30S ribosomal subunit. Forms a loose heterodimer with protein S19. Forms two bridges to the 50S subunit in the 70S ribosome.

In terms of biological role, located at the top of the head of the 30S subunit, it contacts several helices of the 16S rRNA. In the 70S ribosome it contacts the 23S rRNA (bridge B1a) and protein L5 of the 50S subunit (bridge B1b), connecting the 2 subunits; these bridges are implicated in subunit movement. Contacts the tRNAs in the A and P-sites. This is Small ribosomal subunit protein uS13 from Hahella chejuensis (strain KCTC 2396).